The following is a 426-amino-acid chain: MVFIDNIYADEVLDSRGNPTVRATVILSDGTKGSAIVPSGASTGKREALELRDGDNRFLGKGVLKAVENVNTKIADELIGLSPFNQAEVDATMKDIDGTHNYSNLGANAVLGVSMATARAAANSLQIPLYRYLGGANAMTMPVPMFNIINGGEHANNSVDFQEYMIMPTGFENFNDGLRAVAEIYQHLKKVIDFMGESTAVGDEGGFAPNLKSNEEPISVIMSAIEKAGYKAGEQISIALDVAASELIDEKTKKYVLKGENRELTSAELVDYYADLCSKYPIVSIEDGLSEDDWDGWKILTEKLGSKVQLVGDDLFVTNASIVAEGIKKGIANAVLIKPNQIGTVSETMQTIRLAQRNNYNCIMSHRSGESEDAFIADFAVALNCGQIKTGSTARSDRIAKYNRLLEIGAEIGYAEYLGKQPFSKK.

Q162 is a binding site for (2R)-2-phosphoglycerate. E204 acts as the Proton donor in catalysis. Positions 241, 286, and 313 each coordinate Mg(2+). (2R)-2-phosphoglycerate contacts are provided by K338, R367, S368, and K389. Catalysis depends on K338, which acts as the Proton acceptor.

It belongs to the enolase family. Requires Mg(2+) as cofactor.

The protein resides in the cytoplasm. The protein localises to the secreted. It is found in the cell surface. It catalyses the reaction (2R)-2-phosphoglycerate = phosphoenolpyruvate + H2O. Its pathway is carbohydrate degradation; glycolysis; pyruvate from D-glyceraldehyde 3-phosphate: step 4/5. In terms of biological role, catalyzes the reversible conversion of 2-phosphoglycerate (2-PG) into phosphoenolpyruvate (PEP). It is essential for the degradation of carbohydrates via glycolysis. This Aliarcobacter butzleri (strain RM4018) (Arcobacter butzleri) protein is Enolase.